Reading from the N-terminus, the 554-residue chain is Formate--tetrahydrofolate ligase (554 aa).

64-71 (TPYGEGKT) contacts ATP.

The protein belongs to the formate--tetrahydrofolate ligase family.

It catalyses the reaction (6S)-5,6,7,8-tetrahydrofolate + formate + ATP = (6R)-10-formyltetrahydrofolate + ADP + phosphate. Its pathway is one-carbon metabolism; tetrahydrofolate interconversion. The polypeptide is Formate--tetrahydrofolate ligase (Caldicellulosiruptor saccharolyticus (strain ATCC 43494 / DSM 8903 / Tp8T 6331)).